The primary structure comprises 37 residues: Large ribosomal subunit protein bL36 (37 aa).

It belongs to the bacterial ribosomal protein bL36 family.

The chain is Large ribosomal subunit protein bL36 from Bacillus pumilus (strain SAFR-032).